A 154-amino-acid polypeptide reads, in one-letter code: Jupiter microtubule associated homolog 1 (154 aa).

Met1 is modified (N-acetylmethionine). Residues Met1–Arg19 show a composition bias toward polar residues. The segment at Met1–Gly154 is disordered. Position 2 is an N-acetylthreonine; in Hematological and neurological expressed 1 protein, N-terminally processed (Thr2). Phosphoserine is present on residues Ser28 and Ser31. Thr54 carries the post-translational modification Phosphothreonine. 4 positions are modified to phosphoserine: Ser71, Ser87, Ser88, and Ser92. A compositionally biased stretch (polar residues) spans Ser79–Ser91. The segment covering Leu96–Val108 has biased composition (basic and acidic residues). The span at Pro125 to Val138 shows a compositional bias: pro residues. Ser131 carries the post-translational modification Phosphoserine. Residue Lys148 is modified to N6-acetyllysine.

The protein belongs to the JUPITER family. Interacts with the complex composed, at least, of APC, CTNNB1 and GSK3B; the interaction takes place with the inactive form of GSK3B (phosphorylated at 'Ser-9'). Expressed in yolk sac, fetal brain, brain, spleen and bone marrow.

It localises to the nucleus. The protein localises to the cytoplasm. In terms of biological role, modulates negatively AKT-mediated GSK3B signaling. Induces CTNNB1 'Ser-33' phosphorylation and degradation through the suppression of the inhibitory 'Ser-9' phosphorylation of GSK3B, which represses the function of the APC:CTNNB1:GSK3B complex and the interaction with CDH1/E-cadherin in adherent junctions. Plays a role in the regulation of cell cycle and cell adhesion. Has an inhibitory role on AR-signaling pathway through the induction of receptor proteasomal degradation. The chain is Jupiter microtubule associated homolog 1 from Mus musculus (Mouse).